The following is a 472-amino-acid chain: Tryptophan--tRNA ligase, cytoplasmic (472 aa).

The 57-residue stretch at 9-65 folds into the WHEP-TRS domain; it reads SPLELFNSIATQGELVRSLKAGNASKDEIDSAVKMLLSLKMSYKAAMGEDYKANCPP. N6-succinyllysine is present on K155. The 'HIGH' region signature appears at 165–174; it reads PSSEAMHVGH. Positions 350 to 354 match the 'KMSKS' region motif; that stretch reads KMSAS. S352 is modified (phosphoserine).

Belongs to the class-I aminoacyl-tRNA synthetase family. Homodimer. Interacts with oxidized form of GAPDH. In terms of processing, proteolytic cleavage generates 2 forms; T1-TrpRS and T2-TrpRS.

The protein localises to the cytoplasm. It catalyses the reaction tRNA(Trp) + L-tryptophan + ATP = L-tryptophyl-tRNA(Trp) + AMP + diphosphate + H(+). Functionally, catalyzes the attachment of tryptophan to tRNA(Trp) in a two-step reaction: tryptophan is first activated by ATP to form Trp-AMP and then transferred to the acceptor end of the tRNA(Trp). Could also possess an angiostatic activity. In Pongo abelii (Sumatran orangutan), this protein is Tryptophan--tRNA ligase, cytoplasmic (WARS1).